Here is a 231-residue protein sequence, read N- to C-terminus: Small ribosomal subunit protein uS3 (231 aa).

The KH type-2 domain occupies 38-106; sequence IRVYLKNRLK…KTFVNIMEIK (69 aa).

This sequence belongs to the universal ribosomal protein uS3 family. In terms of assembly, part of the 30S ribosomal subunit. Forms a tight complex with proteins S10 and S14.

In terms of biological role, binds the lower part of the 30S subunit head. Binds mRNA in the 70S ribosome, positioning it for translation. This is Small ribosomal subunit protein uS3 from Endomicrobium trichonymphae.